The sequence spans 207 residues: 3-demethoxyubiquinol 3-hydroxylase (207 aa).

Glu-56, Glu-86, His-89, Glu-138, Glu-170, and His-173 together coordinate Fe cation.

The protein belongs to the COQ7 family. Requires Fe cation as cofactor.

The protein localises to the cell membrane. The catalysed reaction is a 5-methoxy-2-methyl-3-(all-trans-polyprenyl)benzene-1,4-diol + AH2 + O2 = a 3-demethylubiquinol + A + H2O. The protein operates within cofactor biosynthesis; ubiquinone biosynthesis. Its function is as follows. Catalyzes the hydroxylation of 2-nonaprenyl-3-methyl-6-methoxy-1,4-benzoquinol during ubiquinone biosynthesis. The sequence is that of 3-demethoxyubiquinol 3-hydroxylase from Cupriavidus pinatubonensis (strain JMP 134 / LMG 1197) (Cupriavidus necator (strain JMP 134)).